A 39-amino-acid chain; its full sequence is U2-ctenitoxin-Co1a (39 aa).

Post-translationally, disulfide bonds are present. Expressed by the venom gland.

It localises to the secreted. Omega-agatoxins are antagonists of voltage-gated calcium channels (Cav). This is U2-ctenitoxin-Co1a from Ctenus ornatus (Brazilian spider).